The primary structure comprises 191 residues: Peptidyl-tRNA hydrolase (191 aa).

Tyr-14 is a tRNA binding site. Catalysis depends on His-19, which acts as the Proton acceptor. Phe-64, Asn-66, and Asn-113 together coordinate tRNA.

Belongs to the PTH family. Monomer.

The protein resides in the cytoplasm. The catalysed reaction is an N-acyl-L-alpha-aminoacyl-tRNA + H2O = an N-acyl-L-amino acid + a tRNA + H(+). In terms of biological role, hydrolyzes ribosome-free peptidyl-tRNAs (with 1 or more amino acids incorporated), which drop off the ribosome during protein synthesis, or as a result of ribosome stalling. Its function is as follows. Catalyzes the release of premature peptidyl moieties from peptidyl-tRNA molecules trapped in stalled 50S ribosomal subunits, and thus maintains levels of free tRNAs and 50S ribosomes. This Fusobacterium nucleatum subsp. nucleatum (strain ATCC 25586 / DSM 15643 / BCRC 10681 / CIP 101130 / JCM 8532 / KCTC 2640 / LMG 13131 / VPI 4355) protein is Peptidyl-tRNA hydrolase.